We begin with the raw amino-acid sequence, 872 residues long: Alanine--tRNA ligase (872 aa).

The Zn(2+) site is built by H567, H571, C669, and H673.

The protein belongs to the class-II aminoacyl-tRNA synthetase family. Zn(2+) serves as cofactor.

Its subcellular location is the cytoplasm. The catalysed reaction is tRNA(Ala) + L-alanine + ATP = L-alanyl-tRNA(Ala) + AMP + diphosphate. Its function is as follows. Catalyzes the attachment of alanine to tRNA(Ala) in a two-step reaction: alanine is first activated by ATP to form Ala-AMP and then transferred to the acceptor end of tRNA(Ala). Also edits incorrectly charged Ser-tRNA(Ala) and Gly-tRNA(Ala) via its editing domain. This Streptococcus thermophilus (strain CNRZ 1066) protein is Alanine--tRNA ligase.